Here is a 495-residue protein sequence, read N- to C-terminus: MLLIISFTIVSFFFIIIFSLFHLLFLQKLRYCNCEICHAYLTSSWKKDFINLSDWYTHLLRRSPTSTIKVHVLNSVITANPSNVEHILKTNFHNYPKGKQFSVILGDLLGRGIFNSDGDTWRFQRKLASLELGSVSVRVFAHEIVKTEIETRLLPILTSFSDNPGSVLDLQDVFRRFSFDTISKLSFGFDPDCLRLPFPISEFAVAFDTASLLSAKRALAPFPLLWKTKRLLRIGSEKKLQESINVINRLAGDLIKQRRLTGLMGKNDLISRFMAVVAEDDDEYLRDIVVSFLLAGRDTVAAGLTGFFWLLTRHPEVENRIREELDRVMGTGFDSVTARCDEMREMDYLHASLYESMRLFPPVQFDSKFALNDDVLSDGTFVNSGTRVTYHAYAMGRMDRIWGPDYEEFKPERWLDNEGKFRPENPVKYPVFQAGARVCIGKEMAIMEMKSIAVAIIRRFETRVASPETTETLRFAPGLTATVNGGLPVMIQERS.

Residues 2 to 22 (LLIISFTIVSFFFIIIFSLFH) form a helical membrane-spanning segment. Residue cysteine 439 participates in heme binding.

Belongs to the cytochrome P450 family. Heme serves as cofactor.

The protein resides in the membrane. Its subcellular location is the endoplasmic reticulum membrane. The catalysed reaction is a 12-hydroxyjasmonyl-L-alpha-amino acid + 2 reduced [NADPH--hemoprotein reductase] + 2 O2 = a 12-hydroxy-12-oxojasmonyl-L-alpha-amino acid + 2 oxidized [NADPH--hemoprotein reductase] + 3 H2O + 3 H(+). Involved in the oxidation of the plant hormone jasmonoyl-L-isoleucine (JA-Ile), a bioactive phytohormone of the jasmonate-mediated signaling pathway. Converts 12-hydroxy-JA-Ile (12OH-JA-Ile) to the carboxy-derivative 12COOH-JA-Ile. Exerts negative feedback control on JA-Ile levels and plays a role in attenuation of jasmonate responses. Also functions as in-chain fatty acids hydroxylase in vitro. Catalyzes the hydroxylation of 12-hydroxy-jasmonoyl-L-phenylalanine (12OH-JA-Phe) in vitro. Converts 12OH-JA-Phe to the carboxy-derivative 12COOH-JA-Phe. In Arabidopsis thaliana (Mouse-ear cress), this protein is Cytochrome P450 94C1.